Here is a 48-residue protein sequence, read N- to C-terminus: Large ribosomal subunit protein bL32 (48 aa).

The segment covering 1 to 20 (MAVPKRRVSKTRAAKRRTHY) has biased composition (basic residues). The tract at residues 1–48 (MAVPKRRVSKTRAAKRRTHYKVSLPMPVKDKDGSYKMPHRANPTTKEY) is disordered.

The protein belongs to the bacterial ribosomal protein bL32 family.

The chain is Large ribosomal subunit protein bL32 from Campylobacter jejuni subsp. doylei (strain ATCC BAA-1458 / RM4099 / 269.97).